Here is a 375-residue protein sequence, read N- to C-terminus: Anhydro-N-acetylmuramic acid kinase (375 aa).

Position 19–26 (19–26) interacts with ATP; sequence GTSLDGVD.

Belongs to the anhydro-N-acetylmuramic acid kinase family.

It catalyses the reaction 1,6-anhydro-N-acetyl-beta-muramate + ATP + H2O = N-acetyl-D-muramate 6-phosphate + ADP + H(+). It functions in the pathway amino-sugar metabolism; 1,6-anhydro-N-acetylmuramate degradation. Its pathway is cell wall biogenesis; peptidoglycan recycling. Functionally, catalyzes the specific phosphorylation of 1,6-anhydro-N-acetylmuramic acid (anhMurNAc) with the simultaneous cleavage of the 1,6-anhydro ring, generating MurNAc-6-P. Is required for the utilization of anhMurNAc either imported from the medium or derived from its own cell wall murein, and thus plays a role in cell wall recycling. This chain is Anhydro-N-acetylmuramic acid kinase, found in Ruegeria sp. (strain TM1040) (Silicibacter sp.).